The sequence spans 537 residues: uncharacterized protein (537 aa).

Disordered regions lie at residues 1 to 33 (MEPG…ILAF), 71 to 98 (SSPP…RKRQ), 197 to 220 (SHNN…SEEK), and 516 to 537 (GRQR…EEQN). The residue at position 72 (serine 72) is a Phosphoserine. The span at 88-98 (SRVDSEARKRQ) shows a compositional bias: basic and acidic residues. Polar residues predominate over residues 197–214 (SHNNMASSNTQSNTQLSE). Over residues 516-529 (GRQRSSRYKSHVHK) the composition is skewed to basic residues.

The protein belongs to the NAD kinase family.

This is an uncharacterized protein from Schizosaccharomyces pombe (strain 972 / ATCC 24843) (Fission yeast).